A 250-amino-acid polypeptide reads, in one-letter code: Transcriptional activator protein ExpR (250 aa).

The HTH luxR-type domain maps to 173 to 238 (KSQEADLFSQ…HAIRLGVEMN (66 aa)). A DNA-binding region (H-T-H motif) is located at residues 197–216 (YQEIALILGITTSTVKFHIG).

Belongs to the autoinducer-regulated transcriptional regulatory protein family.

Its function is as follows. Functions as an OHLL responsive transcriptional regulator that acts in virulence (soft rot disease) through the activation of genes for plant tissue macerating enzymes. This chain is Transcriptional activator protein ExpR (expR), found in Dickeya dadantii (strain 3937) (Erwinia chrysanthemi (strain 3937)).